The following is a 295-amino-acid chain: Phosphatidylserine decarboxylase proenzyme (295 aa).

Catalysis depends on charge relay system; for autoendoproteolytic cleavage activity residues D113, H169, and S256. Residue S256 is the Schiff-base intermediate with substrate; via pyruvic acid; for decarboxylase activity of the active site. S256 is modified (pyruvic acid (Ser); by autocatalysis).

The protein belongs to the phosphatidylserine decarboxylase family. PSD-B subfamily. Prokaryotic type II sub-subfamily. As to quaternary structure, heterodimer of a large membrane-associated beta subunit and a small pyruvoyl-containing alpha subunit. Requires pyruvate as cofactor. Post-translationally, is synthesized initially as an inactive proenzyme. Formation of the active enzyme involves a self-maturation process in which the active site pyruvoyl group is generated from an internal serine residue via an autocatalytic post-translational modification. Two non-identical subunits are generated from the proenzyme in this reaction, and the pyruvate is formed at the N-terminus of the alpha chain, which is derived from the carboxyl end of the proenzyme. The autoendoproteolytic cleavage occurs by a canonical serine protease mechanism, in which the side chain hydroxyl group of the serine supplies its oxygen atom to form the C-terminus of the beta chain, while the remainder of the serine residue undergoes an oxidative deamination to produce ammonia and the pyruvoyl prosthetic group on the alpha chain. During this reaction, the Ser that is part of the protease active site of the proenzyme becomes the pyruvoyl prosthetic group, which constitutes an essential element of the active site of the mature decarboxylase.

It is found in the cell membrane. The enzyme catalyses a 1,2-diacyl-sn-glycero-3-phospho-L-serine + H(+) = a 1,2-diacyl-sn-glycero-3-phosphoethanolamine + CO2. The protein operates within phospholipid metabolism; phosphatidylethanolamine biosynthesis; phosphatidylethanolamine from CDP-diacylglycerol: step 2/2. Functionally, catalyzes the formation of phosphatidylethanolamine (PtdEtn) from phosphatidylserine (PtdSer). The chain is Phosphatidylserine decarboxylase proenzyme from Clostridium botulinum (strain 657 / Type Ba4).